A 52-amino-acid polypeptide reads, in one-letter code: Conotoxin Ac4.3a (52 aa).

A propeptide spanning residues 1-11 (SDFRNAAVHER) is cleaved from the precursor. Glutamine 12 carries the pyrrolidone carboxylic acid modification. Residue glutamate 14 is modified to 4-carboxyglutamate. O-linked (HexNAc...) threonine glycosylation is found at threonine 18 and threonine 20. 4-hydroxyproline occurs at positions 28, 33, and 47. A Proline amide modification is found at proline 47. The propeptide occupies 48–52 (GRRND).

This sequence belongs to the conotoxin A superfamily. Contains 3 disulfide bonds. As to expression, expressed by the venom duct.

The protein localises to the secreted. Probable neurotoxin with ion channel inhibitor activity. The protein is Conotoxin Ac4.3a of Conus achatinus (Little frog cone).